The chain runs to 147 residues: uncharacterized protein (147 aa).

This is an uncharacterized protein from Archaeoglobus fulgidus (strain ATCC 49558 / DSM 4304 / JCM 9628 / NBRC 100126 / VC-16).